An 82-amino-acid chain; its full sequence is Putative antitoxin RelB1 (82 aa).

Its function is as follows. Antitoxin component of a type II toxin-antitoxin (TA) system. Its cognate toxin is RelE1 (Potential). The chain is Putative antitoxin RelB1 (relB1) from Methanocaldococcus jannaschii (strain ATCC 43067 / DSM 2661 / JAL-1 / JCM 10045 / NBRC 100440) (Methanococcus jannaschii).